The following is a 387-amino-acid chain: Protein-glutamate methylesterase/protein-glutamine glutaminase 2 (387 aa).

Positions 4 to 121 constitute a Response regulatory domain; sequence KVLVVDDSGF…SRNPQKVKQL (118 aa). Position 55 is a 4-aspartylphosphate (D55). Positions 148 to 183 are enriched in low complexity; it reads AAPAAPTSSSRAPAPTTAPARAVPTRTAAPATAPAA. Residues 148-199 form a disordered region; the sequence is AAPAAPTSSSRAPAPTTAPARAVPTRTAAPATAPAAHAHHAPAHPTTSGTPK. Residues 192 to 384 enclose the CheB-type methylesterase domain; it reads PTTSGTPKRK…LDDIGRHLVE (193 aa). Active-site residues include S211, H238, and D331.

The protein belongs to the CheB family. Post-translationally, phosphorylated by CheA. Phosphorylation of the N-terminal regulatory domain activates the methylesterase activity.

The protein resides in the cytoplasm. The enzyme catalyses [protein]-L-glutamate 5-O-methyl ester + H2O = L-glutamyl-[protein] + methanol + H(+). It catalyses the reaction L-glutaminyl-[protein] + H2O = L-glutamyl-[protein] + NH4(+). In terms of biological role, involved in chemotaxis. Part of a chemotaxis signal transduction system that modulates chemotaxis in response to various stimuli. Catalyzes the demethylation of specific methylglutamate residues introduced into the chemoreceptors (methyl-accepting chemotaxis proteins or MCP) by CheR. Also mediates the irreversible deamidation of specific glutamine residues to glutamic acid. This Pseudomonas savastanoi pv. phaseolicola (strain 1448A / Race 6) (Pseudomonas syringae pv. phaseolicola (strain 1448A / Race 6)) protein is Protein-glutamate methylesterase/protein-glutamine glutaminase 2.